The chain runs to 358 residues: Protein RecA 2 (358 aa).

69–76 (GPESSGKT) serves as a coordination point for ATP. Residues 331-358 (GIGKSGAPSPRRRTSPRRPKVAARSAAV) are disordered. Residues 340 to 351 (PRRRTSPRRPKV) show a composition bias toward basic residues.

It belongs to the RecA family.

It is found in the cytoplasm. Functionally, can catalyze the hydrolysis of ATP in the presence of single-stranded DNA, the ATP-dependent uptake of single-stranded DNA by duplex DNA, and the ATP-dependent hybridization of homologous single-stranded DNAs. It interacts with LexA causing its activation and leading to its autocatalytic cleavage. This chain is Protein RecA 2, found in Myxococcus xanthus.